Here is a 256-residue protein sequence, read N- to C-terminus: Omega-amidase YafV (256 aa).

In terms of domain architecture, CN hydrolase spans 4 to 234 (LKITLLQQPL…ATRIDAELSM (231 aa)). The active-site Proton acceptor is Glu42. Lys107 is a catalytic residue. Cys141 (nucleophile) is an active-site residue.

It belongs to the carbon-nitrogen hydrolase superfamily. NIT1/NIT2 family.

The enzyme catalyses a monoamide of a dicarboxylate + H2O = a dicarboxylate + NH4(+). Hydrolyzes alpha-ketoglutaramate (a-KGM) to alpha-ketoglutarate (alpha-KG) and ammonia (specific activity 6.65 umol/min/mg), has weak activity on L-glutamine, almost no activity on deaminated glutathione (dGSH) and none on glutathione. May function as a metabolite repair enzyme. The polypeptide is Omega-amidase YafV (yafV) (Escherichia coli (strain B / BL21-DE3)).